The primary structure comprises 291 residues: NAD kinase (291 aa).

D55 serves as the catalytic Proton acceptor. Residues 55-56 (DG), R60, 130-131 (NE), D160, and 171-176 (TAYAFS) contribute to the NAD(+) site.

It belongs to the NAD kinase family. Requires a divalent metal cation as cofactor.

Its subcellular location is the cytoplasm. It catalyses the reaction NAD(+) + ATP = ADP + NADP(+) + H(+). Its function is as follows. Involved in the regulation of the intracellular balance of NAD and NADP, and is a key enzyme in the biosynthesis of NADP. Catalyzes specifically the phosphorylation on 2'-hydroxyl of the adenosine moiety of NAD to yield NADP. The sequence is that of NAD kinase from Corynebacterium glutamicum (strain ATCC 13032 / DSM 20300 / JCM 1318 / BCRC 11384 / CCUG 27702 / LMG 3730 / NBRC 12168 / NCIMB 10025 / NRRL B-2784 / 534).